The chain runs to 89 residues: DNA/RNA-binding protein Alba 2 (89 aa).

K12 carries the post-translational modification N6-acetyllysine. 3 residues coordinate Zn(2+): K14, D18, and D22.

Belongs to the histone-like Alba family. In terms of assembly, forms homodimers and homotetramers. Homodimer at pH below 6.0. Forms homotetramers and higher order homooligomers at near the growth temperature of 80 degrees Celsius and pH 7.0. Interacts with Alba 1; heterodimers lack cooperative DNA-binding behavior and result in more compact chromatin structures compared to Alba 1 homodimers. Acetylated. Acetylation at Lys-12 decreases DNA-binding affinity.

The protein localises to the cytoplasm. It localises to the chromosome. Its function is as follows. Binds single-stranded DNA, RNA and double-stranded DNA. Involved in DNA compaction. This is DNA/RNA-binding protein Alba 2 from Saccharolobus solfataricus (strain ATCC 35092 / DSM 1617 / JCM 11322 / P2) (Sulfolobus solfataricus).